The primary structure comprises 404 residues: Phosphoglycerate kinase (404 aa).

Substrate-binding positions include 21–23 (DFN), Arg36, 59–62 (HLGR), Arg119, and Arg162. ATP-binding positions include Lys213, Gly300, Glu331, and 360–363 (GGDS).

It belongs to the phosphoglycerate kinase family. Monomer.

It is found in the cytoplasm. The enzyme catalyses (2R)-3-phosphoglycerate + ATP = (2R)-3-phospho-glyceroyl phosphate + ADP. It participates in carbohydrate degradation; glycolysis; pyruvate from D-glyceraldehyde 3-phosphate: step 2/5. The sequence is that of Phosphoglycerate kinase from Oenococcus oeni (strain ATCC BAA-331 / PSU-1).